The chain runs to 194 residues: WASH complex subunit 3 (194 aa).

The residue at position 1 (Met-1) is an N-acetylmethionine. Residues 46–74 (TVCEEKLADLSLRIQQIETTLNILDAKLS) are a coiled coil. Over residues 98 to 123 (THSEATSEQSQQNSLQDSGPQESEVT) the composition is skewed to polar residues. 2 disordered regions span residues 98–125 (THSE…VTPE) and 158–194 (SEGL…SFSD).

Belongs to the CCDC53 family. In terms of assembly, component of the WASH core complex also described as WASH regulatory complex (SHRC) composed of WASHC1, WASHC2, WASHC3, WASHC4 and WASHC5. The WASH core complex associates via WASHC2 with the F-actin-capping protein dimer (formed by CAPZA1, CAPZA2 or CAPZA3 and CAPZB) in a transient or substoichiometric manner which was initially described as WASH complex.

It localises to the early endosome. Functionally, acts as a component of the WASH core complex that functions as a nucleation-promoting factor (NPF) at the surface of endosomes, where it recruits and activates the Arp2/3 complex to induce actin polymerization, playing a key role in the fission of tubules that serve as transport intermediates during endosome sorting. The polypeptide is WASH complex subunit 3 (Bos taurus (Bovine)).